We begin with the raw amino-acid sequence, 379 residues long: MAWRGWAQRGWGCGQAWGASVGGRSCEELTAVLTPPQLLGRRFNFFIQQKCGFRKAPRKVEPRRSDPGTSGEAYKRSALIPPVEETVFYPSPYPIRSLIKPLFFTVGFTGCAFGSAAIWQYESLKSRVQSYFDGIKADWLDSIRPQKEGDFRKEINKWWNNLSDGQRTVTGIIAANVLVFCLWRVPSLQRTMIRYFTSNPASKVLCSPMLLSTFSHFSLFHMAANMYVLWSFSSSIVNILGQEQFMAVYLSAGVISNFVSYVGKVATGRYGPSLGASGAIMTVLAAVCTKIPEGRLAIIFLPMFTFTAGNALKAIIAMDTAGMILGWKFFDHAAHLGGALFGIWYVTYGHELIWKNREPLVKIWHEIRTNGPKKGGGSK.

The N-terminal 52 residues, 1-52 (MAWRGWAQRGWGCGQAWGASVGGRSCEELTAVLTPPQLLGRRFNFFIQQKCG), are a transit peptide targeting the mitochondrion. Residues 53–101 (FRKAPRKVEPRRSDPGTSGEAYKRSALIPPVEETVFYPSPYPIRSLIKP) lie on the Mitochondrial matrix side of the membrane. S65 bears the Phosphoserine mark. Position 69 is a phosphothreonine (T69). Residue S70 is modified to Phosphoserine. Residues 102–121 (LFFTVGFTGCAFGSAAIWQY) form a helical membrane-spanning segment. The Mitochondrial intermembrane portion of the chain corresponds to 122 to 167 (ESLKSRVQSYFDGIKADWLDSIRPQKEGDFRKEINKWWNNLSDGQR). The chain crosses the membrane as a helical span at residues 168 to 187 (TVTGIIAANVLVFCLWRVPS). Residues 188–207 (LQRTMIRYFTSNPASKVLCS) are Mitochondrial matrix-facing. A helical transmembrane segment spans residues 208–230 (PMLLSTFSHFSLFHMAANMYVLW). Residues 231–244 (SFSSSIVNILGQEQ) are Mitochondrial intermembrane-facing. The helical transmembrane segment at 245-262 (FMAVYLSAGVISNFVSYV) threads the bilayer. Residues 263-272 (GKVATGRYGP) are Mitochondrial matrix-facing. The chain crosses the membrane as a helical span at residues 273 to 289 (SLGASGAIMTVLAAVCT). The active-site Nucleophile is the S277. Topologically, residues 290-295 (KIPEGR) are mitochondrial intermembrane. A helical transmembrane segment spans residues 296–318 (LAIIFLPMFTFTAGNALKAIIAM). Topologically, residues 319–332 (DTAGMILGWKFFDH) are mitochondrial matrix. The chain crosses the membrane as a helical span at residues 333-354 (AAHLGGALFGIWYVTYGHELIW). H335 is an active-site residue. At 355-379 (KNREPLVKIWHEIRTNGPKKGGGSK) the chain is on the mitochondrial intermembrane side.

This sequence belongs to the peptidase S54 family. As to quaternary structure, interacts with PSEN1 and PSEN2. Binds OPA1. In terms of processing, P-beta is proteolytically processed (beta-cleavage) in a PARL-dependent manner. The cleavage is inhibited when residues Ser-65, Thr-69 and Ser-70 are all phosphorylated.

It localises to the mitochondrion inner membrane. It is found in the nucleus. It catalyses the reaction Cleaves type-1 transmembrane domains using a catalytic dyad composed of serine and histidine that are contributed by different transmembrane domains.. In terms of biological role, required for the control of apoptosis during postnatal growth. Essential for proteolytic processing of an antiapoptotic form of OPA1 which prevents the release of mitochondrial cytochrome c in response to intrinsic apoptotic signals. Required for the maturation of PINK1 into its 52kDa mature form after its cleavage by mitochondrial-processing peptidase (MPP). Promotes cleavage of serine/threonine-protein phosphatase PGAM5 in damaged mitochondria in response to loss of mitochondrial membrane potential. Mediates differential cleavage of PINK1 and PGAM5 depending on the health status of mitochondria, disassociating from PINK1 and associating with PGAM5 in response to mitochondrial membrane potential loss. Required for processing of CLPB into a form with higher protein disaggregase activity by removing an autoinhibitory N-terminal peptide. Promotes processing of DIABLO/SMAC in the mitochondrion which is required for DIABLO apoptotic activity. Also required for cleavage of STARD7 and TTC19. Promotes changes in mitochondria morphology regulated by phosphorylation of P-beta domain. This is Presenilin-associated rhomboid-like protein, mitochondrial (PARL) from Homo sapiens (Human).